Here is a 140-residue protein sequence, read N- to C-terminus: Large-conductance mechanosensitive channel (140 aa).

Helical transmembrane passes span 14-34, 37-57, and 66-86; these read VLDLAVGVIIGGAFTSIVKSL, YLINPLIGLFIGGIDFSDWVL, and FGSFINAVINFLIIAFVVFIL.

This sequence belongs to the MscL family. In terms of assembly, homopentamer.

Its subcellular location is the cell membrane. In terms of biological role, channel that opens in response to stretch forces in the membrane lipid bilayer. May participate in the regulation of osmotic pressure changes within the cell. This Pediococcus pentosaceus (strain ATCC 25745 / CCUG 21536 / LMG 10740 / 183-1w) protein is Large-conductance mechanosensitive channel.